The sequence spans 316 residues: MTMYAKNNTAGKDMLSLLEWNKEELTDIIKLAVAMKTNPAHYSHILSGKILGMIFDKPSTRTRVSFEAGILQLGGQAIVMSSKELQIGRGEPIKDTAHVMSEYIDAIMIRTFSHEKVEELAYHAEIPIINGLTDLHHPCQALADLMTIYEWKDQLEGVKLAYIGDGNNVCHSLLLAGAMVGLDIRLAMPKGYEVDETILATAENLAKESGAKIFVTVDPKHAVADADFIYTDVWTSMGQEEENAKRLADFGEKYQVNAELASVAKPDYHFLHCLPAHREEEVTAEIIDGNHSVIYQQAGNRLHAQKALLAAILEAK.

Carbamoyl phosphate-binding positions include 59 to 62 (STRT), Gln-86, Arg-110, and 137 to 140 (HPCQ). L-ornithine is bound by residues Asn-168, Asp-232, and 236–237 (SM). Carbamoyl phosphate contacts are provided by residues 273-274 (CL) and Arg-301.

Belongs to the aspartate/ornithine carbamoyltransferase superfamily. OTCase family.

It localises to the cytoplasm. It carries out the reaction carbamoyl phosphate + L-ornithine = L-citrulline + phosphate + H(+). The protein operates within amino-acid degradation; L-arginine degradation via ADI pathway; carbamoyl phosphate from L-arginine: step 2/2. Reversibly catalyzes the transfer of the carbamoyl group from carbamoyl phosphate (CP) to the N(epsilon) atom of ornithine (ORN) to produce L-citrulline. In Listeria monocytogenes serotype 4a (strain HCC23), this protein is Ornithine carbamoyltransferase.